The chain runs to 156 residues: MSSNKINKKSIARIAAVQAIYQNILQNNDDMDDIMQNVLSFYRNDSSITNLTGNLKISLSISHFKILVKSVFENINKLDEIIDNHLTNDKDPAHMPILLRALLRAGIYELLFYPTTPAKVVINEYTDIANDMLNGYEIGFVNSVLDTIAKEKNKIS.

The protein belongs to the NusB family.

Its function is as follows. Involved in transcription antitermination. Required for transcription of ribosomal RNA (rRNA) genes. Binds specifically to the boxA antiterminator sequence of the ribosomal RNA (rrn) operons. In Rickettsia akari (strain Hartford), this protein is Transcription antitermination protein NusB.